We begin with the raw amino-acid sequence, 198 residues long: Probable GTP-binding protein EngB (198 aa).

The EngB-type G domain occupies 22–195 (NRNEVAFVGR…IDKLFLEFAT (174 aa)). Residues 30-37 (GRSNVGKS), 57-61 (GKTRL), 75-78 (DLPG), 142-145 (TKSD), and 174-176 (YSS) contribute to the GTP site. 2 residues coordinate Mg(2+): Ser37 and Thr59.

The protein belongs to the TRAFAC class TrmE-Era-EngA-EngB-Septin-like GTPase superfamily. EngB GTPase family. The cofactor is Mg(2+).

Its function is as follows. Necessary for normal cell division and for the maintenance of normal septation. This is Probable GTP-binding protein EngB from Clostridium botulinum (strain Alaska E43 / Type E3).